Consider the following 83-residue polypeptide: Putative defensin-like protein 257 (83 aa).

The first 25 residues, 1-25, serve as a signal peptide directing secretion; that stretch reads MMNVSLKLSFLVFILVIMSNLGSEA. Cystine bridges form between C57–C73, C63–C80, and C67–C82.

Belongs to the DEFL family.

The protein resides in the secreted. This chain is Putative defensin-like protein 257, found in Arabidopsis thaliana (Mouse-ear cress).